Reading from the N-terminus, the 224-residue chain is MKTCAILCAAGKGTRFGGNTPKQFLFLKNKMIIEYSLEVFEKSHFIDGIVLLVPQGFEDIARYLKDKFSKVIFWDYGGNERADTVKRGLEILKGECDIVAIHDSARPFITLELLEKLIADVETHFAVAPGILANDTVKFVVDGHIQNTLPRSNICLIQTPQVFKFDLIYRGYEMFKNELFTDDLQYVERLGIKPKIIENSRINFKITTKEDLLIAEAIVEKGYW.

The protein belongs to the IspD/TarI cytidylyltransferase family. IspD subfamily.

It catalyses the reaction 2-C-methyl-D-erythritol 4-phosphate + CTP + H(+) = 4-CDP-2-C-methyl-D-erythritol + diphosphate. Its pathway is isoprenoid biosynthesis; isopentenyl diphosphate biosynthesis via DXP pathway; isopentenyl diphosphate from 1-deoxy-D-xylulose 5-phosphate: step 2/6. Catalyzes the formation of 4-diphosphocytidyl-2-C-methyl-D-erythritol from CTP and 2-C-methyl-D-erythritol 4-phosphate (MEP). This Caldicellulosiruptor bescii (strain ATCC BAA-1888 / DSM 6725 / KCTC 15123 / Z-1320) (Anaerocellum thermophilum) protein is 2-C-methyl-D-erythritol 4-phosphate cytidylyltransferase.